The sequence spans 491 residues: 3-epi-6-deoxocathasterone 23-monooxygenase CYP90D1 (491 aa).

A helical membrane pass occupies residues 7-27 (LLFFSFFFFIIIVIFNKINGL). C442 provides a ligand contact to heme.

This sequence belongs to the cytochrome P450 family. The cofactor is heme. In terms of tissue distribution, expressed in leaf vascular tissue.

Its subcellular location is the endoplasmic reticulum membrane. It catalyses the reaction 3-epi-6-deoxocathasterone + reduced [NADPH--hemoprotein reductase] + O2 = 6-deoxotyphasterol + oxidized [NADPH--hemoprotein reductase] + H2O + H(+). It carries out the reaction (22S,24R)-22-hydroxy-5alpha-ergostan-3-one + reduced [NADPH--hemoprotein reductase] + O2 = 3-dehydro-6-deoxoteasterone + oxidized [NADPH--hemoprotein reductase] + H2O + H(+). Its pathway is plant hormone biosynthesis; brassinosteroid biosynthesis. Involved in brassinosteroid (BR) biosynthesis. May convert teasterone (TE) to 3-dehydroteasterone (3DT, 3-DHT), or 6-deoxoteasterone (6-deoxoTE) to 3-dehydro-6-deoxoteasterone (6-deoxo3DT, 6-deoxo3DHT). C-23 hydroxylase that converts directly (22S,24R)-22-hydroxy-5-alpha-ergostan-3-one and 3-epi-6-deoxocathasterone to 3-dehydro-6-deoxoteasterone (6-deoxo3DT, 6-deoxo3DHT) and 6-deoxotyphasterol (6-deoxoTY), respectively. These C-23 hydroxylation shortcuts bypass campestanol, 6-deoxocathasterone, and 6-deoxoteasterone (6-deoxoTE). Also catalyzes the conversion of cathasterone to teasterone (TE), 6-deoxotyphasterol (6-deoxoTY) to 6-deoxocathasterone (6-deoxoCT), (22S,24R)-22-hydroxyergost-4-en-3-one (22-OH-4-en-3-one) to (22R,23R)-22,23-dihydroxy-campest-4-en-3-one (22,23-diOH-4-en-3-one) and (22S)-22-hydroxycampesterol (22-OHCR) to (22R,23R)-22,23-dihydroxycampesterol (22,23-diOHCR). The chain is 3-epi-6-deoxocathasterone 23-monooxygenase CYP90D1 from Arabidopsis thaliana (Mouse-ear cress).